The primary structure comprises 196 residues: MAGSKKSNRREEILQALAHMLESAEGASRITTAKLAQQVGVSEAALYRHFPSKARMFEGLIEFIEEALMSRINRILDEEKDTLERIRLVLQLLLAFAERNPGLTRIMSGHALMFENERLRDRINQLFERIETQLRQILRERKLREGKSFPVEEKILAAQLLGQVEGSLNRFVRSDFKYQPTENFEEYWALLSAQIK.

One can recognise an HTH tetR-type domain in the interval 7–68 (SNRREEILQA…GLIEFIEEAL (62 aa)). Positions 31-50 (TTAKLAQQVGVSEAALYRHF) form a DNA-binding region, H-T-H motif. Residues 65-142 (EEALMSRINR…QLRQILRERK (78 aa)) adopt a coiled-coil conformation.

This sequence belongs to the nucleoid occlusion factor SlmA family. In terms of assembly, homodimer. Interacts with FtsZ.

The protein resides in the cytoplasm. The protein localises to the nucleoid. Required for nucleoid occlusion (NO) phenomenon, which prevents Z-ring formation and cell division over the nucleoid. Acts as a DNA-associated cell division inhibitor that binds simultaneously chromosomal DNA and FtsZ, and disrupts the assembly of FtsZ polymers. SlmA-DNA-binding sequences (SBS) are dispersed on non-Ter regions of the chromosome, preventing FtsZ polymerization at these regions. This chain is Nucleoid occlusion factor SlmA, found in Vibrio vulnificus (strain CMCP6).